The following is a 434-amino-acid chain: 4-hydroxy-3-methylbut-2-en-1-yl diphosphate synthase (flavodoxin) (434 aa).

A compositionally biased stretch (polar residues) spans 1–15; the sequence is MQSEAQSPRSSQICS. The segment at 1 to 24 is disordered; that stretch reads MQSEAQSPRSSQICSTEPVFGGHQ. Residues Cys322, Cys325, Cys368, and Glu375 each coordinate [4Fe-4S] cluster.

This sequence belongs to the IspG family. [4Fe-4S] cluster serves as cofactor.

It catalyses the reaction (2E)-4-hydroxy-3-methylbut-2-enyl diphosphate + oxidized [flavodoxin] + H2O + 2 H(+) = 2-C-methyl-D-erythritol 2,4-cyclic diphosphate + reduced [flavodoxin]. The protein operates within isoprenoid biosynthesis; isopentenyl diphosphate biosynthesis via DXP pathway; isopentenyl diphosphate from 1-deoxy-D-xylulose 5-phosphate: step 5/6. Converts 2C-methyl-D-erythritol 2,4-cyclodiphosphate (ME-2,4cPP) into 1-hydroxy-2-methyl-2-(E)-butenyl 4-diphosphate. This Burkholderia ambifaria (strain MC40-6) protein is 4-hydroxy-3-methylbut-2-en-1-yl diphosphate synthase (flavodoxin).